The sequence spans 128 residues: MEQTFIAIKPDGVQRGLCGEVMKFIQPMKHYLDLKDMPFYAGLCKYMSSGPVFAMVWEGEGIVKMMLGETNPADSKPGSIRGDFCINIGRNIIHGSDTVENAKMEVGLWFKPEEFVAYAEKAKAWVYE.

Methionine 1 carries the post-translational modification N-acetylmethionine. The ATP site is built by lysine 9, phenylalanine 39, threonine 70, arginine 81, and asparagine 91. Histidine 94 serves as the catalytic Pros-phosphohistidine intermediate.

This sequence belongs to the NDK family. The cofactor is Mg(2+).

It localises to the cytoplasm. The protein localises to the nucleus. Its subcellular location is the cell projection. It is found in the lamellipodium. The protein resides in the ruffle. It catalyses the reaction a 2'-deoxyribonucleoside 5'-diphosphate + ATP = a 2'-deoxyribonucleoside 5'-triphosphate + ADP. The enzyme catalyses a ribonucleoside 5'-diphosphate + ATP = a ribonucleoside 5'-triphosphate + ADP. Functionally, major role in the synthesis of nucleoside triphosphates other than ATP. In Merluccius bilinearis (Silver hake), this protein is Nucleoside diphosphate kinase B (nme2).